We begin with the raw amino-acid sequence, 629 residues long: Probable potassium transport system protein Kup 3 (629 aa).

12 helical membrane passes run 20–40 (LSLS…LYTF), 54–74 (VTTI…IASV), 106–126 (PFII…GTIT), 143–163 (PSLK…LFAI), 171–191 (IGKA…ILGA), 212–232 (FLFS…LCAT), 253–273 (WFGL…ALVL), 291–311 (FLLP…QAII), 343–363 (IYIG…IIGF), 372–392 (AYGI…FIAL), 400–420 (IITS…FFAA), and 425–445 (FING…MMYI).

This sequence belongs to the HAK/KUP transporter (TC 2.A.72) family.

The protein resides in the cell inner membrane. It catalyses the reaction K(+)(in) + H(+)(in) = K(+)(out) + H(+)(out). Functionally, transport of potassium into the cell. Likely operates as a K(+):H(+) symporter. The sequence is that of Probable potassium transport system protein Kup 3 from Legionella pneumophila (strain Paris).